The following is a 203-amino-acid chain: dITP/XTP pyrophosphatase (203 aa).

7 to 12 provides a ligand contact to substrate; that stretch reads TGNRDK. Asp-73 (proton acceptor) is an active-site residue. Residue Asp-73 participates in Mg(2+) binding. Substrate is bound by residues Ser-74, 155-158, Lys-178, and 183-184; these read FGYD and HR.

This sequence belongs to the HAM1 NTPase family. As to quaternary structure, homodimer. Requires Mg(2+) as cofactor.

The catalysed reaction is XTP + H2O = XMP + diphosphate + H(+). It catalyses the reaction dITP + H2O = dIMP + diphosphate + H(+). The enzyme catalyses ITP + H2O = IMP + diphosphate + H(+). Pyrophosphatase that catalyzes the hydrolysis of nucleoside triphosphates to their monophosphate derivatives, with a high preference for the non-canonical purine nucleotides XTP (xanthosine triphosphate), dITP (deoxyinosine triphosphate) and ITP. Seems to function as a house-cleaning enzyme that removes non-canonical purine nucleotides from the nucleotide pool, thus preventing their incorporation into DNA/RNA and avoiding chromosomal lesions. In Wolinella succinogenes (strain ATCC 29543 / DSM 1740 / CCUG 13145 / JCM 31913 / LMG 7466 / NCTC 11488 / FDC 602W) (Vibrio succinogenes), this protein is dITP/XTP pyrophosphatase.